The chain runs to 230 residues: Orotidine 5'-phosphate decarboxylase (230 aa).

Residues D16, K38, 65–74 (DLKLHDIGNT), T119, R180, Q189, G209, and R210 each bind substrate. The active-site Proton donor is the K67.

This sequence belongs to the OMP decarboxylase family. Type 1 subfamily. Homodimer.

It catalyses the reaction orotidine 5'-phosphate + H(+) = UMP + CO2. It participates in pyrimidine metabolism; UMP biosynthesis via de novo pathway; UMP from orotate: step 2/2. In terms of biological role, catalyzes the decarboxylation of orotidine 5'-monophosphate (OMP) to uridine 5'-monophosphate (UMP). The chain is Orotidine 5'-phosphate decarboxylase from Methylobacterium radiotolerans (strain ATCC 27329 / DSM 1819 / JCM 2831 / NBRC 15690 / NCIMB 10815 / 0-1).